The primary structure comprises 378 residues: MGVKDLSKVIGDHSPNSIRLKEFKGYFGRKVAVDASMCLYQFLIAVRQDGSQLQTESGETTSHLLGMFYRTIRMIDNGIKPVYVFDGKPPQMKTSELEKRTERRTEAEKQRNDAVELGDETSVNKFEKRLVKVTKEQSEEAKRLVTLMGIPVLDAPCEAEAQCAALAKAGKVFATVSEDMDALTFGSPILLRQMIASEAKKLPVKEMNLNQVLKDFGMNMGQFVDLCILLGCDYVSTIRGIGPKKAFELIKKYECIENVLETINQTKYPIPQDWQYKEARRLFLEPDVMNCENLELVWKEPDVEGIVQFLCVEKSFNEDRVRGSLTRMQKGRQAAQQARIDSFFSVSKVVTSETTKRKNEEKNNLKKRGPSLGKKAKK.

Positions 1 to 104 (MGVKDLSKVI…SELEKRTERR (104 aa)) are N-domain. Mg(2+) is bound at residue aspartate 34. Residues arginine 47 and arginine 70 each contribute to the DNA site. Aspartate 86 contributes to the Mg(2+) binding site. Positions 90–113 (PQMKTSELEKRTERRTEAEKQRND) are disordered. A compositionally biased stretch (basic and acidic residues) spans 95-113 (SELEKRTERRTEAEKQRND). The interval 122–253 (SVNKFEKRLV…KKAFELIKKY (132 aa)) is I-domain. 4 residues coordinate Mg(2+): glutamate 158, glutamate 160, aspartate 179, and aspartate 181. Glutamate 158 is a binding site for DNA. Residues glycine 231 and aspartate 233 each coordinate DNA. Position 233 (aspartate 233) interacts with Mg(2+). Residues 336–344 (QQARIDSFF) are interaction with PCNA. Residues 348–378 (KVVTSETTKRKNEEKNNLKKRGPSLGKKAKK) are disordered. The span at 354 to 364 (TTKRKNEEKNN) shows a compositional bias: basic and acidic residues. The segment covering 365–378 (LKKRGPSLGKKAKK) has biased composition (basic residues).

This sequence belongs to the XPG/RAD2 endonuclease family. FEN1 subfamily. As to quaternary structure, interacts with PCNA. Three molecules of FEN1 bind to one PCNA trimer with each molecule binding to one PCNA monomer. PCNA stimulates the nuclease activity without altering cleavage specificity. Mg(2+) is required as a cofactor. Phosphorylated. Phosphorylation upon DNA damage induces relocalization to the nuclear plasma.

The protein resides in the nucleus. Its subcellular location is the nucleolus. It is found in the nucleoplasm. It localises to the mitochondrion. Structure-specific nuclease with 5'-flap endonuclease and 5'-3' exonuclease activities involved in DNA replication and repair. During DNA replication, cleaves the 5'-overhanging flap structure that is generated by displacement synthesis when DNA polymerase encounters the 5'-end of a downstream Okazaki fragment. It enters the flap from the 5'-end and then tracks to cleave the flap base, leaving a nick for ligation. Also involved in the long patch base excision repair (LP-BER) pathway, by cleaving within the apurinic/apyrimidinic (AP) site-terminated flap. Acts as a genome stabilization factor that prevents flaps from equilibrating into structures that lead to duplications and deletions. Also possesses 5'-3' exonuclease activity on nicked or gapped double-stranded DNA, and exhibits RNase H activity. Also involved in replication and repair of rDNA and in repairing mitochondrial DNA. The chain is Flap endonuclease 1 from Brugia malayi (Filarial nematode worm).